Reading from the N-terminus, the 180-residue chain is Required for excision 1-B domain-containing protein (180 aa).

The tract at residues 1-23 (MITAEAASESTVPAVPGDTAATG) is disordered.

The polypeptide is Required for excision 1-B domain-containing protein (Bos taurus (Bovine)).